The primary structure comprises 364 residues: Chorismate synthase (364 aa).

Arg48 and Arg54 together coordinate NADP(+). Residues 125–127, 238–239, Gly278, 293–297, and Arg319 contribute to the FMN site; these read RSS, NA, and KPTSS.

This sequence belongs to the chorismate synthase family. Homotetramer. FMNH2 serves as cofactor.

The enzyme catalyses 5-O-(1-carboxyvinyl)-3-phosphoshikimate = chorismate + phosphate. The protein operates within metabolic intermediate biosynthesis; chorismate biosynthesis; chorismate from D-erythrose 4-phosphate and phosphoenolpyruvate: step 7/7. Its function is as follows. Catalyzes the anti-1,4-elimination of the C-3 phosphate and the C-6 proR hydrogen from 5-enolpyruvylshikimate-3-phosphate (EPSP) to yield chorismate, which is the branch point compound that serves as the starting substrate for the three terminal pathways of aromatic amino acid biosynthesis. This reaction introduces a second double bond into the aromatic ring system. The sequence is that of Chorismate synthase from Shewanella loihica (strain ATCC BAA-1088 / PV-4).